We begin with the raw amino-acid sequence, 189 residues long: UPF0312 protein VPA0850 (189 aa).

The N-terminal stretch at 1 to 22 is a signal peptide; sequence MKKSLFATGLAIAMALPLGAQA.

This sequence belongs to the UPF0312 family. Type 1 subfamily.

It is found in the periplasm. The sequence is that of UPF0312 protein VPA0850 from Vibrio parahaemolyticus serotype O3:K6 (strain RIMD 2210633).